The sequence spans 287 residues: Pantothenate synthetase (287 aa).

30–37 is a binding site for ATP; the sequence is MGNLHSGH. Catalysis depends on His37, which acts as the Proton donor. A (R)-pantoate-binding site is contributed by Gln61. A beta-alanine-binding site is contributed by Gln61. 149-152 is an ATP binding site; the sequence is GEKD. Gln155 serves as a coordination point for (R)-pantoate. ATP-binding positions include Val178 and 186 to 189; that span reads LSSR.

The protein belongs to the pantothenate synthetase family. In terms of assembly, homodimer.

The protein resides in the cytoplasm. It carries out the reaction (R)-pantoate + beta-alanine + ATP = (R)-pantothenate + AMP + diphosphate + H(+). Its pathway is cofactor biosynthesis; (R)-pantothenate biosynthesis; (R)-pantothenate from (R)-pantoate and beta-alanine: step 1/1. Functionally, catalyzes the condensation of pantoate with beta-alanine in an ATP-dependent reaction via a pantoyl-adenylate intermediate. This is Pantothenate synthetase from Pseudomonas putida (strain GB-1).